The sequence spans 278 residues: Sulfur carrier protein FdhD (278 aa).

The active-site Cysteine persulfide intermediate is Cys-117.

It belongs to the FdhD family.

It localises to the cytoplasm. Functionally, required for formate dehydrogenase (FDH) activity. Acts as a sulfur carrier protein that transfers sulfur from IscS to the molybdenum cofactor prior to its insertion into FDH. The polypeptide is Sulfur carrier protein FdhD (Variovorax paradoxus (strain S110)).